A 69-amino-acid polypeptide reads, in one-letter code: DNA gyrase inhibitor YacG (69 aa).

4 residues coordinate Zn(2+): Cys13, Cys16, Cys32, and Cys36.

The protein belongs to the DNA gyrase inhibitor YacG family. Interacts with GyrB. Zn(2+) serves as cofactor.

Its function is as follows. Inhibits all the catalytic activities of DNA gyrase by preventing its interaction with DNA. Acts by binding directly to the C-terminal domain of GyrB, which probably disrupts DNA binding by the gyrase. The protein is DNA gyrase inhibitor YacG of Neisseria gonorrhoeae (strain ATCC 700825 / FA 1090).